Reading from the N-terminus, the 297-residue chain is 4-diphosphocytidyl-2-C-methyl-D-erythritol kinase (297 aa).

The active site involves Lys-14. 99-109 is a binding site for ATP; the sequence is PVAAGIGGGSA. The active site involves Asp-141.

Belongs to the GHMP kinase family. IspE subfamily.

It catalyses the reaction 4-CDP-2-C-methyl-D-erythritol + ATP = 4-CDP-2-C-methyl-D-erythritol 2-phosphate + ADP + H(+). It participates in isoprenoid biosynthesis; isopentenyl diphosphate biosynthesis via DXP pathway; isopentenyl diphosphate from 1-deoxy-D-xylulose 5-phosphate: step 3/6. Catalyzes the phosphorylation of the position 2 hydroxy group of 4-diphosphocytidyl-2C-methyl-D-erythritol. The polypeptide is 4-diphosphocytidyl-2-C-methyl-D-erythritol kinase (Bradyrhizobium diazoefficiens (strain JCM 10833 / BCRC 13528 / IAM 13628 / NBRC 14792 / USDA 110)).